A 289-amino-acid chain; its full sequence is MQGVYPAIITPFKDGKVDYDGLQSNLDFLIENGVSGVIPVGTTGESPTLTPLEHEQVIEKVVEFVDGRVEVIAGTGSNSTSEALEFSQYAEDVGVDGVLLITPYYNKPSQEGLKRHFGEIANSINVPIVLYNVPSRTALNIEPYTIKYLFEEYSNITAIKEANPNLSQVSEVLDSCNIDVLSGNDELTLPIISLGGKGVVSVVANIAPKEFVQMVDFANAGKFDKAKEIHYKLFPLMKLMFIETNPIPIKTAMNMLGMPSGELRLPLCEMAESNKSKLQNALNNLGLLK.

T43 lines the pyruvate pocket. The active-site Proton donor/acceptor is Y131. The Schiff-base intermediate with substrate role is filled by K160. A pyruvate-binding site is contributed by V200.

It belongs to the DapA family. In terms of assembly, homotetramer; dimer of dimers.

It localises to the cytoplasm. The enzyme catalyses L-aspartate 4-semialdehyde + pyruvate = (2S,4S)-4-hydroxy-2,3,4,5-tetrahydrodipicolinate + H2O + H(+). It participates in amino-acid biosynthesis; L-lysine biosynthesis via DAP pathway; (S)-tetrahydrodipicolinate from L-aspartate: step 3/4. Catalyzes the condensation of (S)-aspartate-beta-semialdehyde [(S)-ASA] and pyruvate to 4-hydroxy-tetrahydrodipicolinate (HTPA). The chain is 4-hydroxy-tetrahydrodipicolinate synthase from Methanococcus maripaludis (strain C7 / ATCC BAA-1331).